Reading from the N-terminus, the 316-residue chain is MTKFKLKIASRRSKLAMVQTLWVKEQLEKNIPDLEVSIEAMATQGDKILDVALAKIGDKGLFTKELEAQMLVGHADIAVHSLKDLPTNLPDGLTLGCITKREDPSDALVVNKKNKIYQLESLPPGSIVGTSSLRRLAQLRYKFPHLDFKDIRGNVITRIEKLDSGEFDCIILAAAGLKRLGFESRVHQIIPNEISLHAVGQGALGIECKSDDKEVLKIISVLEDKVSSQRCLAERSFLRELEGGCQVPIGVNSSIQNDEIALIGMVASIDGKRLIKNESIGNIKYPEEVGKKLAEKLKLQGADKILSEIFEQFRDK.

An S-(dipyrrolylmethanemethyl)cysteine modification is found at C245.

This sequence belongs to the HMBS family. Monomer. Dipyrromethane is required as a cofactor.

The enzyme catalyses 4 porphobilinogen + H2O = hydroxymethylbilane + 4 NH4(+). It functions in the pathway porphyrin-containing compound metabolism; protoporphyrin-IX biosynthesis; coproporphyrinogen-III from 5-aminolevulinate: step 2/4. The protein operates within porphyrin-containing compound metabolism; chlorophyll biosynthesis. Tetrapolymerization of the monopyrrole PBG into the hydroxymethylbilane pre-uroporphyrinogen in several discrete steps. This chain is Porphobilinogen deaminase, found in Prochlorococcus marinus subsp. pastoris (strain CCMP1986 / NIES-2087 / MED4).